The primary structure comprises 255 residues: Small ribosomal subunit protein eS1 (255 aa).

The span at 1–18 shows a compositional bias: basic residues; that stretch reads MAVGKNKRLSKGKKGLKK. Positions 1–28 are disordered; that stretch reads MAVGKNKRLSKGKKGLKKRTQDPFSRKD. Position 2 is an N-acetylalanine; partial (alanine 2). Positions 19 to 28 are enriched in basic and acidic residues; it reads RTQDPFSRKD.

Belongs to the eukaryotic ribosomal protein eS1 family. Component of the small ribosomal subunit. Mature ribosomes consist of a small (40S) and a large (60S) subunit. The 40S subunit contains about 33 different proteins and 1 molecule of RNA (18S). The 60S subunit contains about 49 different proteins and 3 molecules of RNA (25S, 5.8S and 5S).

The protein resides in the cytoplasm. This Ajellomyces capsulatus (strain G186AR / H82 / ATCC MYA-2454 / RMSCC 2432) (Darling's disease fungus) protein is Small ribosomal subunit protein eS1.